A 298-amino-acid chain; its full sequence is N-acetylmuramic acid 6-phosphate etherase (298 aa).

The region spanning Ala-55 to Lys-218 is the SIS domain. The active-site Proton donor is the Glu-83. Residue Glu-114 is part of the active site.

The protein belongs to the GCKR-like family. MurNAc-6-P etherase subfamily. Homodimer.

It carries out the reaction N-acetyl-D-muramate 6-phosphate + H2O = N-acetyl-D-glucosamine 6-phosphate + (R)-lactate. The protein operates within amino-sugar metabolism; N-acetylmuramate degradation. Functionally, specifically catalyzes the cleavage of the D-lactyl ether substituent of MurNAc 6-phosphate, producing GlcNAc 6-phosphate and D-lactate. This Lactobacillus johnsonii (strain CNCM I-12250 / La1 / NCC 533) protein is N-acetylmuramic acid 6-phosphate etherase.